The primary structure comprises 113 residues: Cell cycle protein GpsB (113 aa).

A coiled-coil region spans residues 32–71; it reads LDNVIKDYESFTKDNQQLSDENERLRAKVDELTKQVAVGA.

The protein belongs to the GpsB family. Forms polymers through the coiled coil domains. Interacts with PBP1, MreC and EzrA.

The protein localises to the cytoplasm. In terms of biological role, divisome component that associates with the complex late in its assembly, after the Z-ring is formed, and is dependent on DivIC and PBP2B for its recruitment to the divisome. Together with EzrA, is a key component of the system that regulates PBP1 localization during cell cycle progression. Its main role could be the removal of PBP1 from the cell pole after pole maturation is completed. Also contributes to the recruitment of PBP1 to the division complex. Not essential for septum formation. This chain is Cell cycle protein GpsB, found in Lactiplantibacillus plantarum (strain ATCC BAA-793 / NCIMB 8826 / WCFS1) (Lactobacillus plantarum).